A 2090-amino-acid polypeptide reads, in one-letter code: Dysferlin (2090 aa).

The C2 1 domain occupies 1 to 101 (MLRVFILFAE…LATPSLSASF (101 aa)). Residues 1–2056 (MLRVFILFAE…FILWRRFRCA (2056 aa)) lie on the Cytoplasmic side of the membrane. Positions 18, 19, 21, and 40 each coordinate Ca(2+). The segment at 130–217 (VPLFPPPASL…SAPPRKLLSD (88 aa)) is disordered. Residues 155–172 (GGEEDTEDQGLTGDEAEP) are compositionally biased toward acidic residues. G164 is modified (phosphoserine). Position 166 is a phosphothreonine (T166). At G167 the chain carries Phosphoserine. Residues 188–199 (PRKPPSHPPPHY) are compositionally biased toward pro residues. C2 domains follow at residues 206–323 (RSSA…RKWL), 362–498 (DKED…EEEP), 1146–1272 (GVNR…PLTR), 1320–1448 (PPPQ…AESP), 1571–1689 (PMPP…ARCG), and 1805–1953 (GRPG…EKCS). Residue A209 is modified to Phosphoserine. P219 carries the post-translational modification Phosphothreonine. Positions 411, 419, 467, 469, 475, 1178, 1184, 1240, and 1242 each coordinate Ca(2+). 7 residues coordinate Ca(2+): D1604, D1610, D1659, D1661, D1924, S1927, and D1930. Positions 2005–2027 (SEHEERPAGQGRDEPNMNPKLED) are disordered. Residues 2057–2077 (IILFIILFILLLFLGVFVYAF) form a helical membrane-spanning segment. Over 2078–2090 (PNYAAMKLVKPFR) the chain is Extracellular.

It belongs to the ferlin family. As to quaternary structure, interacts with CAV3. Interacts with AHNAK; the interaction is direct and Ca(2+)-independent. Interacts with AHNAK2; the interaction is direct and Ca(2+)-independent. Interacts with ANXA1; the interaction is Ca(2+)- and injury state-dependent. Interacts with ANXA2; the interaction is Ca(2+)- and injury state-dependent. Interacts with CACNA1S and PARVB. Interacts with TRIM72/MG53; interaction is required for transport to sites of cell injury during repair patch formation. Interacts with RIPOR2; this interaction occurs during early myogenic differentiation. Ca(2+) is required as a cofactor. As to expression, expressed in skeletal and cardiac muscles (at protein level). Expressed in skeletal muscle and heart. Also found in brain, liver and kidney.

The protein localises to the cell membrane. It is found in the sarcolemma. The protein resides in the cytoplasmic vesicle membrane. Functionally, key calcium ion sensor involved in the Ca(2+)-triggered synaptic vesicle-plasma membrane fusion. Plays a role in the sarcolemma repair mechanism of both skeletal muscle and cardiomyocytes that permits rapid resealing of membranes disrupted by mechanical stress. The chain is Dysferlin (Dysf) from Mus musculus (Mouse).